A 289-amino-acid polypeptide reads, in one-letter code: ATP synthase gamma chain (289 aa).

The protein belongs to the ATPase gamma chain family. In terms of assembly, F-type ATPases have 2 components, CF(1) - the catalytic core - and CF(0) - the membrane proton channel. CF(1) has five subunits: alpha(3), beta(3), gamma(1), delta(1), epsilon(1). CF(0) has three main subunits: a, b and c.

Its subcellular location is the cell inner membrane. Produces ATP from ADP in the presence of a proton gradient across the membrane. The gamma chain is believed to be important in regulating ATPase activity and the flow of protons through the CF(0) complex. This Nitrosococcus oceani (strain ATCC 19707 / BCRC 17464 / JCM 30415 / NCIMB 11848 / C-107) protein is ATP synthase gamma chain.